The primary structure comprises 174 residues: uncharacterized protein (174 aa).

Positions Val-138–Arg-174 are disordered. Residues Thr-162 to Arg-174 show a composition bias toward basic and acidic residues.

This is an uncharacterized protein from Bos taurus (Bovine).